Here is a 263-residue protein sequence, read N- to C-terminus: Putative S-adenosyl-L-methionine-dependent methyltransferase Mkms_0098 (263 aa).

S-adenosyl-L-methionine is bound by residues D121 and 150 to 151 (ES).

Belongs to the UPF0677 family.

Functionally, exhibits S-adenosyl-L-methionine-dependent methyltransferase activity. This is Putative S-adenosyl-L-methionine-dependent methyltransferase Mkms_0098 from Mycobacterium sp. (strain KMS).